Reading from the N-terminus, the 241-residue chain is Ribonuclease PH (241 aa).

Phosphate-binding positions include arginine 89 and 127–129 (GTR).

Belongs to the RNase PH family. As to quaternary structure, homohexameric ring arranged as a trimer of dimers.

It catalyses the reaction tRNA(n+1) + phosphate = tRNA(n) + a ribonucleoside 5'-diphosphate. Phosphorolytic 3'-5' exoribonuclease that plays an important role in tRNA 3'-end maturation. Removes nucleotide residues following the 3'-CCA terminus of tRNAs; can also add nucleotides to the ends of RNA molecules by using nucleoside diphosphates as substrates, but this may not be physiologically important. Probably plays a role in initiation of 16S rRNA degradation (leading to ribosome degradation) during starvation. The protein is Ribonuclease PH of Stenotrophomonas maltophilia (strain K279a).